We begin with the raw amino-acid sequence, 346 residues long: D-alanine--D-alanine ligase A (346 aa).

Residues Lys138–Arg332 enclose the ATP-grasp domain. Gln164 to Thr217 is a binding site for ATP. Mg(2+) is bound by residues Asp286, Glu299, and Asn301.

This sequence belongs to the D-alanine--D-alanine ligase family. Mg(2+) serves as cofactor. It depends on Mn(2+) as a cofactor.

It localises to the cytoplasm. It carries out the reaction 2 D-alanine + ATP = D-alanyl-D-alanine + ADP + phosphate + H(+). It functions in the pathway cell wall biogenesis; peptidoglycan biosynthesis. Its function is as follows. Cell wall formation. The polypeptide is D-alanine--D-alanine ligase A (Pseudomonas aeruginosa (strain ATCC 15692 / DSM 22644 / CIP 104116 / JCM 14847 / LMG 12228 / 1C / PRS 101 / PAO1)).